A 207-amino-acid chain; its full sequence is Protein TEX261 homolog (207 aa).

Helical transmembrane passes span 2 to 22, 54 to 74, 94 to 114, and 126 to 146; these read FLSLLILLSYALGFVFCVVCL, IIFLLGIFEDLDFTSLLFSFI, YKFILSVLSFIISHISWFIYF, and IIAIFTFCVWLIPLIFFISLA.

It belongs to the SVP26 family.

It localises to the membrane. This Dictyostelium discoideum (Social amoeba) protein is Protein TEX261 homolog.